Reading from the N-terminus, the 195-residue chain is MIIRDVELVKVARTPGDYPPPLKGEVAFVGRSNVGKSSLLNALFNRKIAFVSKTPGKTRSINFYLVNSKYYFVDLPGYGYAKVSKKERMLWKRLVEDYFKNRWSLQMVFLLVDGRIPPQDSDLMMVEWMKSLNIPFTIVLTKMDKVKMSERAKKLEEHRKVFSKYGEYTIIPTSSVTGEGISELLDLISTLLKEN.

The 173-residue stretch at Leu22–Glu194 folds into the EngB-type G domain. GTP contacts are provided by residues Gly30 to Ser37, Gly56 to Ser60, Asp74 to Gly77, Thr141 to Asp144, and Thr173 to Ser175. The Mg(2+) site is built by Ser37 and Thr58.

The protein belongs to the TRAFAC class TrmE-Era-EngA-EngB-Septin-like GTPase superfamily. EngB GTPase family. The cofactor is Mg(2+).

In terms of biological role, necessary for normal cell division and for the maintenance of normal septation. This is Probable GTP-binding protein EngB from Thermotoga maritima (strain ATCC 43589 / DSM 3109 / JCM 10099 / NBRC 100826 / MSB8).